We begin with the raw amino-acid sequence, 365 residues long: MDGPAEPQIPGLWDTYEDDISEISQKLPGEYFRYKGVPFPVGLYSLESISLAENTQDVRDDDIFIITYPKSGTTWMIEIICLILKEGDPSWIRSVPIWERAPWCETIVGAFSLPDQYSPRLMSSHLPIQIFTKAFFSSKAKVIYMGRNPRDVVVSLYHYSKIAGQLKDPGTPDQFLRDFLKGEVQFGSWFDHIKGWLRMKGKDNFLFITYEELQQDLQGSVERICGFLGRPLGKEALGSVVAHSTFSAMKANTMSNYTLLPPSLLDHRRGAFLRKGVCGDWKNHFTVAQSEAFDRAYRKQMRGMPTFPWDEDPEEDGSPDPEPSPEPEPKPSLEPNTSLEREPRPNSSPSPSPGQASETPHPRPS.

Residue 70 to 75 (KSGTTW) coordinates 3'-phosphoadenylyl sulfate. Substrate-binding residues include tryptophan 98, tryptophan 103, and histidine 125. Residue histidine 125 is the Proton acceptor of the active site. Residues arginine 147, serine 155, tyrosine 210, 244-249 (STFSAM), and 274-276 (RKG) each bind 3'-phosphoadenylyl sulfate. The disordered stretch occupies residues 303 to 365 (GMPTFPWDED…ASETPHPRPS (63 aa)). Positions 309–325 (WDEDPEEDGSPDPEPSP) are enriched in acidic residues. Residue serine 348 is modified to Phosphoserine.

Belongs to the sulfotransferase 1 family. In terms of processing, phosphorylated. Expressed in the stratum granulosum-stratum corneum junction in the skin (at protein level). Expressed highly in placenta, prostate and trachea and lower expression in the small intestine and lung.

Its subcellular location is the cytoplasm. It is found in the cytosol. The protein localises to the microsome. The protein resides in the nucleus. The catalysed reaction is an alcohol + 3'-phosphoadenylyl sulfate = an alkyl sulfate + adenosine 3',5'-bisphosphate + H(+). It catalyses the reaction 3beta-hydroxyandrost-5-en-17-one + 3'-phosphoadenylyl sulfate = dehydroepiandrosterone 3-sulfate + adenosine 3',5'-bisphosphate + H(+). The enzyme catalyses (24S)-hydroxycholesterol + 3'-phosphoadenylyl sulfate = (24S)-hydroxycholesterol 3-sulfate + adenosine 3',5'-bisphosphate + H(+). It carries out the reaction cholesterol + 3'-phosphoadenylyl sulfate = cholesterol sulfate + adenosine 3',5'-bisphosphate + H(+). The catalysed reaction is pregnenolone + 3'-phosphoadenylyl sulfate = pregnenolone sulfate + adenosine 3',5'-bisphosphate + H(+). In terms of biological role, sulfotransferase that utilizes 3'-phospho-5'-adenylyl sulfate (PAPS) as sulfonate donor to catalyze the sulfate conjugation. Responsible for the sulfation of cholesterol. Catalyzes sulfation of the 3beta-hydroxyl groups of steroids, such as, pregnenolone and dehydroepiandrosterone (DHEA). Preferentially sulfonates cholesterol, while it also has significant activity with pregnenolone and DHEA. Plays a role in epidermal cholesterol metabolism and in the regulation of epidermal proliferation and differentiation. Sulfonates pregnenolone but not cholesterol. This is Sulfotransferase 2B1 (SULT2B1) from Homo sapiens (Human).